The following is a 347-amino-acid chain: GMP reductase (347 aa).

108 to 131 contributes to the NADP(+) binding site; the sequence is ADFEKTKQILDLNPALNFVCIDVA. Glycine 181 and glycine 183 together coordinate K(+). Cysteine 186 (thioimidate intermediate) is an active-site residue. Residue 216-239 coordinates NADP(+); that stretch reads IVSDGGCTTPGDVAKAFGGGADFV.

It belongs to the IMPDH/GMPR family. GuaC type 1 subfamily. As to quaternary structure, homotetramer.

It carries out the reaction IMP + NH4(+) + NADP(+) = GMP + NADPH + 2 H(+). Functionally, catalyzes the irreversible NADPH-dependent deamination of GMP to IMP. It functions in the conversion of nucleobase, nucleoside and nucleotide derivatives of G to A nucleotides, and in maintaining the intracellular balance of A and G nucleotides. This is GMP reductase from Shigella flexneri.